The following is a 493-amino-acid chain: Lysine--tRNA ligase (493 aa).

Mg(2+)-binding residues include Glu404 and Glu411.

This sequence belongs to the class-II aminoacyl-tRNA synthetase family. Homodimer. Mg(2+) is required as a cofactor.

The protein localises to the cytoplasm. The enzyme catalyses tRNA(Lys) + L-lysine + ATP = L-lysyl-tRNA(Lys) + AMP + diphosphate. The polypeptide is Lysine--tRNA ligase (Oceanobacillus iheyensis (strain DSM 14371 / CIP 107618 / JCM 11309 / KCTC 3954 / HTE831)).